The primary structure comprises 117 residues: Large ribosomal subunit protein bL20c (117 aa).

Belongs to the bacterial ribosomal protein bL20 family.

It localises to the plastid. Its subcellular location is the chloroplast. Functionally, binds directly to 23S ribosomal RNA and is necessary for the in vitro assembly process of the 50S ribosomal subunit. It is not involved in the protein synthesizing functions of that subunit. The chain is Large ribosomal subunit protein bL20c from Olimarabidopsis pumila (Dwarf rocket).